Reading from the N-terminus, the 805-residue chain is MGSEQALSEVVESAKERFGRLRHLVQKFLDDDDVPQECLPLLQECAEIWSSYVDACQDITMQAPKEDANRLSKGFLRLNETAFLYYMIVYTLLEDTLPRLKEFSSNKDQNVRNLYGERIQLLHNDPNIERIRNVIENYPKFIQLQTIEPGKLSSMLHFHGDALLLIDVRPRSEFVRAHIKCKNIICIDPASFKDSFTDQQIESVSLITSPHSDITFFSNRDKFKFIILYTDTQLHNNFQQRQTRILAKILSQNSVIKPLSGTKILILENGFSNWVKLGGAYQSSVSETAHLTSSSSTPAFGSPQVPTGLFNQKSLSPNKDKSMPMVSMNTQPLLTTVQRPQLPLYYSDLPIIPQPSPNRNSPTVQKFSPHPPTTLSKLNTPSTIQNKANTVERISPDIRAAQAHAYLPPASNVFSPRIPPLPQQNLSSSRQTILNNSQVLDLDLIVGLENIGNCCYMNCILQCLVGTHDLVRMFLDNTYLNFINFDSSRGSKGLLAKNFAILVNNMHRHGAFTPPNVRTIPVQTIQFKKICGHINPMYSDSMQQDCQEFCQFLLDGLHEDLNQNGSKKHLKQLSDEEERMREKMSIRKASALEWERFLLTDFSAIIDLFQGQYASRLQCQVCEHTSTTYQTFSVLSVPVPRVKTCNILDCFREFTKCERLGVDEQWSCPKCLKKQPSTKQLKITRLPKKLIINLKRFDNQMNKNNVFVQYPYSLDLTPYWARDFNHEAIVNEDIPTRGQVPPFRYRLYGVACHSGSLYGGHYTSYVYKGPKKGWYFFDDSLYRPITFSTEFITPSAYVLFYERIF.

A Rhodanese domain is found at 159–283 (HGDALLLIDV…WVKLGGAYQS (125 aa)). Residues 359–380 (RNSPTVQKFSPHPPTTLSKLNT) form a disordered region. Residues 446–804 (VGLENIGNCC…SAYVLFYERI (359 aa)) enclose the USP domain. Cysteine 455 (nucleophile) is an active-site residue. The active-site Proton acceptor is histidine 761.

It belongs to the peptidase C19 family.

The catalysed reaction is Thiol-dependent hydrolysis of ester, thioester, amide, peptide and isopeptide bonds formed by the C-terminal Gly of ubiquitin (a 76-residue protein attached to proteins as an intracellular targeting signal).. This is Ubiquitin carboxyl-terminal hydrolase 5 (UBP5) from Saccharomyces cerevisiae (strain ATCC 204508 / S288c) (Baker's yeast).